The primary structure comprises 241 residues: Cytochrome b6-f complex iron-sulfur subunit 2, cyanelle (241 aa).

Residues 1 to 62 (MSAFACSAVA…AAKATTFSIS (62 aa)) constitute a cyanelle transit peptide. The helical transmembrane segment at 83 to 103 (LLGAIAGPTIGAGGPFVSFLV) threads the bilayer. Residues 127 to 223 (VEKWLETXKP…VNVLEDGVVA (97 aa)) enclose the Rieske domain. The [2Fe-2S] cluster site is built by C169, H171, C187, and H190. A disulfide bridge connects residues C174 and C189.

It belongs to the Rieske iron-sulfur protein family. As to quaternary structure, the 4 large subunits of the cytochrome b6-f complex are cytochrome b6, subunit IV (17 kDa polypeptide, petD), cytochrome f and the Rieske protein, while the 4 small subunits are petG, petL, petM and petN. The complex functions as a dimer. It depends on [2Fe-2S] cluster as a cofactor.

The protein localises to the plastid. It localises to the cyanelle thylakoid membrane. It catalyses the reaction 2 oxidized [plastocyanin] + a plastoquinol + 2 H(+)(in) = 2 reduced [plastocyanin] + a plastoquinone + 4 H(+)(out). In terms of biological role, component of the cytochrome b6-f complex, which mediates electron transfer between photosystem II (PSII) and photosystem I (PSI), cyclic electron flow around PSI, and state transitions. The chain is Cytochrome b6-f complex iron-sulfur subunit 2, cyanelle (petC-2) from Cyanophora paradoxa.